A 308-amino-acid chain; its full sequence is UPF0026 protein jhp_0109 (308 aa).

The region spanning 18–247 (FGKSLGVDLS…VSLPKRSTAQ (230 aa)) is the Radical SAM core domain. [4Fe-4S] cluster is bound by residues cysteine 33, cysteine 37, and cysteine 40.

The protein belongs to the UPF0026 family. [4Fe-4S] cluster serves as cofactor.

The chain is UPF0026 protein jhp_0109 from Helicobacter pylori (strain J99 / ATCC 700824) (Campylobacter pylori J99).